The sequence spans 363 residues: Inactive CLIP domain-containing serine protease A8 (363 aa).

The signal sequence occupies residues 1–25 (MPSWWCCCCLVVLLYAQRMIVPSSA). One can recognise a Clip domain in the interval 33–82 (LQECPGGFCSPKYLCPNGTYNEANAQNQEIIMLRFGEEDVCQDYMQVCCS). 3 disulfides stabilise this stretch: Cys36-Cys80, Cys41-Cys73, and Cys47-Cys81. 4 N-linked (GlcNAc...) asparagine glycosylation sites follow: Asn49, Asn83, Asn117, and Asn166. The Peptidase S1 domain maps to 114–360 (VEGNRTYAQY…FVTWINATIE (247 aa)). Intrachain disulfides connect Cys245-Cys317, Cys276-Cys297, and Cys307-Cys336. N-linked (GlcNAc...) asparagine glycosylation is found at Asn319 and Asn356.

This sequence belongs to the peptidase S1 family. CLIP subfamily. Heterodimer of a light chain and a heavy chain; disulfide-linked. In terms of processing, secreted as a full-length protein. Proteolytically cleaved into two chains which remain covalently linked. Cleavage is induced by Gram-positive or Gram-negative bacteria infection.

It is found in the secreted. Its function is as follows. Inactive serine protease which plays an essential role in the innate immune response against bacteria, fungi and protozoa infection by activating the melanization cascade. In the melanization cascade, acts downstream of TEP1 and SPCLIP1 to promote CLIPA28 and CLIPC9 proteolytic cleavage and CLIPC9 recruitment to microbial surfaces. In the resistant strain L3-5, required for the melanization of killed parasite P.berghei ookinetes which results in their clearance. In the susceptible strain G3, appears to be dispensable for ookinete elimination which occurs by lysis. Required for the melanization of Gram-positive and Gram-negative bacteria. During the late stage of fungus B.bassiana-mediated infection, required for the initiation of hyphae melanization by promoting prophenoloxidase PPO activation. This is Inactive CLIP domain-containing serine protease A8 from Anopheles gambiae (African malaria mosquito).